A 386-amino-acid chain; its full sequence is Galactokinase (386 aa).

A substrate-binding site is contributed by 35-38 (EHTD). ATP is bound by residues S69 and 125-131 (GAGLSSS). Mg(2+)-binding residues include S131 and E163. Catalysis depends on D175, which acts as the Proton acceptor. Y224 lines the substrate pocket.

The protein belongs to the GHMP kinase family. GalK subfamily.

The protein localises to the cytoplasm. It carries out the reaction alpha-D-galactose + ATP = alpha-D-galactose 1-phosphate + ADP + H(+). Its pathway is carbohydrate metabolism; galactose metabolism. Its function is as follows. Catalyzes the transfer of the gamma-phosphate of ATP to D-galactose to form alpha-D-galactose-1-phosphate (Gal-1-P). The polypeptide is Galactokinase (Vibrio parahaemolyticus serotype O3:K6 (strain RIMD 2210633)).